We begin with the raw amino-acid sequence, 118 residues long: Holin-like protein CidA 2 (118 aa).

The next 4 helical transmembrane spans lie at Met5–Phe27, Met31–Leu50, Leu62–Leu84, and Gly88–Ser110.

The protein belongs to the CidA/LrgA family. CidA subfamily.

It is found in the cell membrane. Functionally, increases the activity of extracellular murein hydrolases possibly by mediating their export via hole formation. Inhibited by the antiholin-like proteins LrgAB. In an unstressed cell, the LrgAB products probably inhibit the function of the CidA protein. When a cell is stressed by the addition of antibiotics or by other factors in the environment, CidA possibly oligomerizes within the bacterial cell membrane, creating lesions that disrupt the proton motive force, which in turn results in loss of cell viability. These lesions are also hypothesized to regulate the subsequent cell lysis by either allowing the murein hydrolases access to the cell wall substrate and/or regulating their activity by a possible change in the cell wall pH that results from loss of membrane potential. This is Holin-like protein CidA 2 (cidA2) from Bacillus anthracis.